Reading from the N-terminus, the 407-residue chain is Tyrosine--tRNA ligase 1 (407 aa).

Tyr-35 is a binding site for L-tyrosine. Residues 40 to 49 carry the 'HIGH' region motif; it reads PTGDSLHVGH. The L-tyrosine site is built by Tyr-168 and Gln-172. The short motif at 228–232 is the 'KMSKS' region element; it reads KMGKT. An ATP-binding site is contributed by Lys-231. Residues 340 to 406 form the S4 RNA-binding domain; the sequence is SSILDVLVHT…GKKKYYKIVI (67 aa).

It belongs to the class-I aminoacyl-tRNA synthetase family. TyrS type 1 subfamily. In terms of assembly, homodimer.

It localises to the cytoplasm. It catalyses the reaction tRNA(Tyr) + L-tyrosine + ATP = L-tyrosyl-tRNA(Tyr) + AMP + diphosphate + H(+). In terms of biological role, catalyzes the attachment of tyrosine to tRNA(Tyr) in a two-step reaction: tyrosine is first activated by ATP to form Tyr-AMP and then transferred to the acceptor end of tRNA(Tyr). This is Tyrosine--tRNA ligase 1 from Clostridium acetobutylicum (strain ATCC 824 / DSM 792 / JCM 1419 / IAM 19013 / LMG 5710 / NBRC 13948 / NRRL B-527 / VKM B-1787 / 2291 / W).